We begin with the raw amino-acid sequence, 617 residues long: Chaperone protein HscA homolog (617 aa).

This sequence belongs to the heat shock protein 70 family.

Its function is as follows. Chaperone involved in the maturation of iron-sulfur cluster-containing proteins. Has a low intrinsic ATPase activity which is markedly stimulated by HscB. The polypeptide is Chaperone protein HscA homolog (Actinobacillus pleuropneumoniae serotype 5b (strain L20)).